The chain runs to 336 residues: MQSIPVKNAGDRLVDAYRRTYYYLRLSITDVCNFRCNYCLPDGYHPSHERDKFLTVDEIRRAVSAFAAMGAQKVRITGGEPTLRKDFLQITENITALDGIRHVALTTNGYRMAQDVGAWKQAGISSINVSVDSLDPRMFYQITGENKFTEVMRGIDRAFEAGYRKIKVNSVLMKDLNEREFDKFLAWVKDRPIQMRFIELMQTGEMDAFFRCHHLSGQVLAEKLIRDGWQLQSKGITDGPAKVFRHPDYVGEIGLIMPYEPDFCASCNRLRVSAKGKLHLCLFGEEGIDLRDLLQRDDQQSLLQARLFAALQGKREHHFLHRGDSGIRKNLSTIGG.

The 226-residue stretch at 16–241 folds into the Radical SAM core domain; the sequence is AYRRTYYYLR…QSKGITDGPA (226 aa). Position 25 (arginine 25) interacts with GTP. [4Fe-4S] cluster-binding residues include cysteine 32 and cysteine 36. Tyrosine 38 contacts S-adenosyl-L-methionine. Cysteine 39 contacts [4Fe-4S] cluster. Arginine 75 lines the GTP pocket. An S-adenosyl-L-methionine-binding site is contributed by glycine 79. Threonine 106 serves as a coordination point for GTP. Serine 130 contacts S-adenosyl-L-methionine. Lysine 167 provides a ligand contact to GTP. Methionine 201 is an S-adenosyl-L-methionine binding site. [4Fe-4S] cluster is bound by residues cysteine 264 and cysteine 267. 269–271 is a GTP binding site; sequence RLR. A [4Fe-4S] cluster-binding site is contributed by cysteine 281.

It belongs to the radical SAM superfamily. MoaA family. In terms of assembly, monomer and homodimer. [4Fe-4S] cluster is required as a cofactor.

The enzyme catalyses GTP + AH2 + S-adenosyl-L-methionine = (8S)-3',8-cyclo-7,8-dihydroguanosine 5'-triphosphate + 5'-deoxyadenosine + L-methionine + A + H(+). It participates in cofactor biosynthesis; molybdopterin biosynthesis. Functionally, catalyzes the cyclization of GTP to (8S)-3',8-cyclo-7,8-dihydroguanosine 5'-triphosphate. This Actinobacillus succinogenes (strain ATCC 55618 / DSM 22257 / CCUG 43843 / 130Z) protein is GTP 3',8-cyclase.